Consider the following 1469-residue polypeptide: Actin cytoskeleton-regulatory complex protein pan1 (1469 aa).

The tract at residues 1–163 (MYSSSNSFLG…PPPKSSGSKI (163 aa)) is disordered. Low complexity predominate over residues 17–52 (PGQQPPFMQQQQQPSYSQFPPGQQQQPQPTGFAPQP). Over residues 54–83 (GYAQPQLSSFGSQLQPQPTGFPSGQLQPQF) the composition is skewed to polar residues. The segment covering 85–124 (GFPGAAPQQSQQPQPTGFQPQQPQFTGYPPQSQPPQLQVP) has biased composition (low complexity). The EH 1 domain occupies 175–263 (DQAKFEQLFK…ETIKNEVSSM (89 aa)). Residues 207-242 (LSGSDLSKIWVLSDSTKSGQLFFPEFALAMYLCNLR) form the EF-hand 1 domain. Disordered stretches follow at residues 276–311 (PEPV…QPTN) and 323–409 (TGFL…LVAQ). Over residues 298–307 (PPAPQQPQPQ) the composition is skewed to pro residues. Residues 323-346 (TGFLSQPTGLSPNQAPFGQQSNLA) show a composition bias toward polar residues. The segment covering 347 to 366 (PQPTGLPGQPQQQSLQPQPT) has biased composition (low complexity). The span at 391–401 (YASNLSPSQTG) shows a compositional bias: polar residues. Residues 466–555 (EKKIYDDLFR…PELIPPSTRN (90 aa)) form the EH 2 domain. Residues 499-534 (LNRQDLERIWTLADPNNRGRLNMDEFAVAMHLIYRK) form the EF-hand 2 domain. Disordered stretches follow at residues 619-650 (AAAG…SEDE), 801-845 (AAEL…RDVE), and 898-1469 (TAHI…RVLD). Positions 634-646 (NGRTPSPAASSQA) are enriched in polar residues. Residues 641–767 (AASSQASEDE…LFRLKDAKAH (127 aa)) adopt a coiled-coil conformation. Residues 818–845 (AAARRLESESANVKADREKNDAMTRDVE) are compositionally biased toward basic and acidic residues. 2 stretches are compositionally biased toward low complexity: residues 908–917 (RASPSQSQQS) and 933–942 (TGSTGSLPGT). 5 stretches are compositionally biased toward basic and acidic residues: residues 943–961 (THED…RIAE), 981–1016 (RQER…EERG), 1039–1106 (ARTD…RLRA), 1117–1137 (KKQE…EQEA), and 1144–1161 (AELE…RELE). Positions 973–1172 (EASETLVQRQ…MEEESSSDDE (200 aa)) form a coiled coil. Over residues 1162-1174 (AMEEESSSDDEGP) the composition is skewed to acidic residues. Pro residues predominate over residues 1193 to 1209 (EAPPPPPPAPATAPPVP). Residues 1210 to 1227 (AIAEPEAPTSPATSPASS) are compositionally biased toward low complexity. The segment covering 1264-1284 (SDTHSTNPFHRLAQQQESTAP) has biased composition (polar residues). Over residues 1368–1378 (PEADAAPSAPV) the composition is skewed to low complexity. 2 stretches are compositionally biased toward pro residues: residues 1379–1391 (AAPP…PVPA) and 1400–1430 (APPP…PPAA). A WH2 domain is found at 1436–1453 (DRGALLASIQAGKGLRKV). Positions 1456–1469 (NDRSTSSTAGRVLD) are enriched in polar residues.

This sequence belongs to the PAN1 family. Component of the PAN1 actin cytoskeleton-regulatory complex.

It is found in the cell membrane. The protein localises to the endosome membrane. The protein resides in the cytoplasm. Its subcellular location is the cytoskeleton. It localises to the actin patch. In terms of biological role, component of the PAN1 actin cytoskeleton-regulatory complex required for the internalization of endosomes during actin-coupled endocytosis. The complex links the site of endocytosis to the cell membrane-associated actin cytoskeleton. Mediates uptake of external molecules and vacuolar degradation of plasma membrane proteins. Plays a role in the proper organization of the cell membrane-associated actin cytoskeleton and promotes its destabilization. This Aspergillus terreus (strain NIH 2624 / FGSC A1156) protein is Actin cytoskeleton-regulatory complex protein pan1 (pan1).